The following is a 538-amino-acid chain: Adenine deaminase (538 aa).

It belongs to the metallo-dependent hydrolases superfamily. Adenine deaminase family. The cofactor is Mn(2+).

The enzyme catalyses adenine + H2O + H(+) = hypoxanthine + NH4(+). The chain is Adenine deaminase from Methanothermobacter thermautotrophicus (strain ATCC 29096 / DSM 1053 / JCM 10044 / NBRC 100330 / Delta H) (Methanobacterium thermoautotrophicum).